Here is a 162-residue protein sequence, read N- to C-terminus: MRRAVCPGSFDPVTNGHLDIIGRASRLFDEVIVGVLINQSKTGLFTVDERIDMLREVVRSYDNVRVESFRGLLVDFCHAQQASVLIKGLRAVSDFDYELQMAQMNIGLAGVETLFMPTNPLYSFLSSSLVKDVAKWGGDISAHVPEVVRGALLARLDPPSRR.

Ser-9 contacts substrate. ATP is bound by residues 9-10 and His-17; that span reads SF. Substrate-binding residues include Lys-41, Leu-73, and Lys-87. ATP-binding positions include 88–90, Glu-98, and 122–128; these read GLR and YSFLSSS.

This sequence belongs to the bacterial CoaD family. Homohexamer. It depends on Mg(2+) as a cofactor.

Its subcellular location is the cytoplasm. The catalysed reaction is (R)-4'-phosphopantetheine + ATP + H(+) = 3'-dephospho-CoA + diphosphate. Its pathway is cofactor biosynthesis; coenzyme A biosynthesis; CoA from (R)-pantothenate: step 4/5. Functionally, reversibly transfers an adenylyl group from ATP to 4'-phosphopantetheine, yielding dephospho-CoA (dPCoA) and pyrophosphate. This is Phosphopantetheine adenylyltransferase from Salinispora tropica (strain ATCC BAA-916 / DSM 44818 / JCM 13857 / NBRC 105044 / CNB-440).